A 219-amino-acid polypeptide reads, in one-letter code: MPLIGDDAPSFTAVTTQGIIKFPDDYKGKWVILFSHPADFTPVCTTEFMTFASMQEEFRSMNTELIGLSIDSVFSHIAWLKRIEEKIEYKGMKNLEIKFPVIEDLKMDVAKKYGMVQPKASTTQAVRAVFIIDPEAKIRTILYYPQSTGRNMQEIKRIVVALQKNAAEKVATPANWQPGEDVIIPPPSSMEAVKERMGKEEEGKRCLDWFMCLKKDTQK.

A Thioredoxin domain is found at 2-164 (PLIGDDAPSF…IKRIVVALQK (163 aa)). Residue Cys-44 is the Cysteine sulfenic acid (-SOH) intermediate of the active site. Residue Arg-127 participates in substrate binding. Cysteines 206 and 212 form a disulfide.

This sequence belongs to the peroxiredoxin family. Prx6 subfamily. As to quaternary structure, homodecamer. Pentamer of dimers that assemble into a ring structure.

It is found in the cytoplasm. The catalysed reaction is a hydroperoxide + [thioredoxin]-dithiol = an alcohol + [thioredoxin]-disulfide + H2O. Functionally, thiol-specific peroxidase that catalyzes the reduction of hydrogen peroxide and organic hydroperoxides to water and alcohols, respectively. Plays a role in cell protection against oxidative stress by detoxifying peroxides. The protein is Peroxiredoxin of Methanosarcina mazei (strain ATCC BAA-159 / DSM 3647 / Goe1 / Go1 / JCM 11833 / OCM 88) (Methanosarcina frisia).